The primary structure comprises 573 residues: Putative ferric-chelate reductase 1 (573 aa).

The helical transmembrane segment at 4–24 (VCKSPQRLLFVLVSCFGLVQS) threads the bilayer. Residues 15–181 (LVSCFGLVQS…GTTGTSTTPA (167 aa)) enclose the Reelin domain. The 116-residue stretch at 213-328 (GCYFVAVQAS…NEYYLMIAAG (116 aa)) folds into the DOMON domain. 2 N-linked (GlcNAc...) asparagine glycosylation sites follow: N286 and N300. One can recognise a Cytochrome b561 domain in the interval 332 to 532 (QGNIQFHTNK…YILQDLNLRA (201 aa)). A helical transmembrane segment spans residues 369 to 389 (AHGCLMLISWMATGSIGMIIA). 2 residues coordinate heme b: H370 and H411. 2 helical membrane passes run 414–434 (LMTL…VSAG) and 441–461 (HPVL…VAAF). 2 residues coordinate heme b: H441 and H477. Helical transmembrane passes span 479 to 499 (CNAF…LALF), 506 to 526 (GWML…YILQ), and 550 to 570 (ILLF…LVGI).

It belongs to the FRRS1 family. The cofactor is heme b.

It localises to the membrane. Functionally, putative ferric-chelate reductases reduce Fe(3+) to Fe(2+) before its transport from the endosome to the cytoplasm. The protein is Putative ferric-chelate reductase 1 (frrs1) of Danio rerio (Zebrafish).